Here is a 139-residue protein sequence, read N- to C-terminus: Maximins 4/H3 type 5 (139 aa).

An N-terminal signal peptide occupies residues 1–18 (MNFKYIFAVSFLIASAYA). Residues 19-43 (RSVQNDEQSLSQRDVLEEESLREIR) constitute a propeptide that is removed on maturation. The residue at position 70 (N70) is an Asparagine amide. A propeptide spanning residues 74 to 118 (TAEEHEVMKRLEAVMRDLDSLDHPEEASERETRGFNQDEIAKEKR) is cleaved from the precursor. I138 carries the isoleucine amide modification.

It belongs to the bombinin family. As to expression, expressed by the skin glands.

The protein localises to the secreted. Maximin-4 shows antibacterial activity against both Gram-positive and Gram-negative bacteria. It also shows antimicrobial activity against the fungus C.albicans, but not against A.flavus nor P.uticale. It has little hemolytic activity. It does not possess a significant cytotoxicity against tumor cell lines. It does not possess a significant anti-HIV activity. In terms of biological role, maximin-H3 shows antibacterial activity against both Gram-positive and Gram-negative bacteria. It also shows antimicrobial activity against the fungus C.albicans. Shows strong hemolytic activity. This Bombina maxima (Giant fire-bellied toad) protein is Maximins 4/H3 type 5.